Consider the following 371-residue polypeptide: Uroporphyrinogen decarboxylase (371 aa).

A compositionally biased stretch (polar residues) spans 1 to 14 (MARWATMSTETTGT). The disordered stretch occupies residues 1–30 (MARWATMSTETTGTGARDEGPRPGDPADSP). Substrate contacts are provided by residues 49-53 (RQAGR), D98, Y173, S228, and H342.

It belongs to the uroporphyrinogen decarboxylase family. As to quaternary structure, homodimer.

Its subcellular location is the cytoplasm. The enzyme catalyses uroporphyrinogen III + 4 H(+) = coproporphyrinogen III + 4 CO2. It functions in the pathway porphyrin-containing compound metabolism; protoporphyrin-IX biosynthesis; coproporphyrinogen-III from 5-aminolevulinate: step 4/4. Its function is as follows. Catalyzes the decarboxylation of four acetate groups of uroporphyrinogen-III to yield coproporphyrinogen-III. This chain is Uroporphyrinogen decarboxylase, found in Salinispora tropica (strain ATCC BAA-916 / DSM 44818 / JCM 13857 / NBRC 105044 / CNB-440).